Here is a 151-residue protein sequence, read N- to C-terminus: MHALQAKILDPRLGTEFPLPQYATPGSAGLDLRALLKEDTVLEPGQTLLIPTGLSVYIGDPGLAAMILPRSGLGHKHGVVLGNLVGLIDSDYQGELMVSCWNRGNTPFTITIGERIAQLILVPVVQAHFDIVEQFDETQRGTGGFGHSGTR.

Substrate is bound by residues 70–72 (RSG), Asn-83, 87–89 (LID), and Met-97.

This sequence belongs to the dUTPase family. The cofactor is Mg(2+).

It carries out the reaction dUTP + H2O = dUMP + diphosphate + H(+). The protein operates within pyrimidine metabolism; dUMP biosynthesis; dUMP from dCTP (dUTP route): step 2/2. Functionally, this enzyme is involved in nucleotide metabolism: it produces dUMP, the immediate precursor of thymidine nucleotides and it decreases the intracellular concentration of dUTP so that uracil cannot be incorporated into DNA. The polypeptide is Deoxyuridine 5'-triphosphate nucleotidohydrolase (Pseudomonas entomophila (strain L48)).